Reading from the N-terminus, the 180-residue chain is MANALKEKYVNEVQPALIEKFNFTSPMQAPKIDKIVLNMGVGDAVSNSKNLDEAVEELKLIAGQQPVITKAKKSIAGFRLREGMSIGTKVTLRGARMYEFLDKLINISLPRVRDFRGVSSKAFDGRGNYTLGIREQLIFPEIDFDQVNRVRGLDIVVVTTAQNDEEGRELLTLLGMPFAK.

This sequence belongs to the universal ribosomal protein uL5 family. Part of the 50S ribosomal subunit; part of the 5S rRNA/L5/L18/L25 subcomplex. Contacts the 5S rRNA and the P site tRNA. Forms a bridge to the 30S subunit in the 70S ribosome.

In terms of biological role, this is one of the proteins that bind and probably mediate the attachment of the 5S RNA into the large ribosomal subunit, where it forms part of the central protuberance. In the 70S ribosome it contacts protein S13 of the 30S subunit (bridge B1b), connecting the 2 subunits; this bridge is implicated in subunit movement. Contacts the P site tRNA; the 5S rRNA and some of its associated proteins might help stabilize positioning of ribosome-bound tRNAs. The chain is Large ribosomal subunit protein uL5 from Leuconostoc citreum (strain KM20).